The sequence spans 203 residues: Recombination protein RecR (203 aa).

The C4-type zinc finger occupies 56–71 (CAVCGNVSDEERCRIC). In terms of domain architecture, Toprim spans 79–179 (SLICVVEEPK…TVTRIASGLP (101 aa)).

This sequence belongs to the RecR family.

May play a role in DNA repair. It seems to be involved in an RecBC-independent recombinational process of DNA repair. It may act with RecF and RecO. The protein is Recombination protein RecR of Mycolicibacterium vanbaalenii (strain DSM 7251 / JCM 13017 / BCRC 16820 / KCTC 9966 / NRRL B-24157 / PYR-1) (Mycobacterium vanbaalenii).